Here is a 57-residue protein sequence, read N- to C-terminus: Sperm histone (57 aa).

Positions 1–57 (MARYRRTRTRSRSRRRRRSRRRRSSRRRRYGRSRRSYRSVGRRRRRYGRRRRRRRRY) are disordered. The residue at position 9 (Thr9) is a Phosphothreonine.

Belongs to the protamine P1 family. In terms of tissue distribution, testis.

The protein resides in the nucleus. It is found in the chromosome. Functionally, protamines substitute for histones in the chromatin of sperm during the haploid phase of spermatogenesis. They compact sperm DNA into a highly condensed, stable and inactive complex. The sequence is that of Sperm histone from Coturnix japonica (Japanese quail).